The following is a 243-amino-acid chain: Probable transcriptional regulatory protein BB_0025 (243 aa).

The protein belongs to the TACO1 family.

It localises to the cytoplasm. In Borreliella burgdorferi (strain ATCC 35210 / DSM 4680 / CIP 102532 / B31) (Borrelia burgdorferi), this protein is Probable transcriptional regulatory protein BB_0025.